A 479-amino-acid polypeptide reads, in one-letter code: Glycogen synthase (479 aa).

Lys-15 is a binding site for ADP-alpha-D-glucose.

This sequence belongs to the glycosyltransferase 1 family. Bacterial/plant glycogen synthase subfamily.

The catalysed reaction is [(1-&gt;4)-alpha-D-glucosyl](n) + ADP-alpha-D-glucose = [(1-&gt;4)-alpha-D-glucosyl](n+1) + ADP + H(+). It functions in the pathway glycan biosynthesis; glycogen biosynthesis. Synthesizes alpha-1,4-glucan chains using ADP-glucose. This chain is Glycogen synthase, found in Clostridium novyi (strain NT).